The chain runs to 104 residues: MTTYAIIDIAGKQLWVEPKRYYSVNKINVEIGKKIALQRILLLSKIGEKIKIGQPFLNGISINAIILRHFLAPKVIVYKMQPKKKTRRKRGHRQHLTSFLINDF.

Belongs to the bacterial ribosomal protein bL21 family. As to quaternary structure, part of the 50S ribosomal subunit.

Its subcellular location is the plastid. It is found in the cyanelle. This protein binds to 23S rRNA. This chain is Large ribosomal subunit protein bL21c, found in Cyanophora paradoxa.